We begin with the raw amino-acid sequence, 312 residues long: MNKNKSNKLKGIVVALKANFLIVEIDHKNFKDYSFDEFNGKIRLLCIRRSKLNYQGLFIDVGDIVGVESIDYKNKRAVVSDVEPRQSFLKRPAVANVTLVSICISADEPLFDMEQTSRFLLTAECANIEPLIILTKIDLITKNDLILYINKFKSWGYDCIPVSIHNSQGIDSLIERLRKTKLTVLAGPSGVGKTSLINHLIPTVSLPTSSVSKKLKRGTHTTRHVELFAIGNGSLLADTPGFNRPEIVCEPSDFAFLFPEFRTQLSNSQCKFRNCLHRDEPGCVIDKDLERYPFYRENLEEMINSPLPYQAG.

A CP-type G domain is found at 86 to 245 (QSFLKRPAVA…LADTPGFNRP (160 aa)). Residues 135–138 (TKID) and 187–195 (GPSGVGKTS) contribute to the GTP site. The Zn(2+) site is built by cysteine 270, cysteine 275, histidine 277, and cysteine 283.

The protein belongs to the TRAFAC class YlqF/YawG GTPase family. RsgA subfamily. As to quaternary structure, monomer. Associates with 30S ribosomal subunit, binds 16S rRNA. The cofactor is Zn(2+).

Its subcellular location is the cytoplasm. Its function is as follows. One of several proteins that assist in the late maturation steps of the functional core of the 30S ribosomal subunit. Helps release RbfA from mature subunits. May play a role in the assembly of ribosomal proteins into the subunit. Circularly permuted GTPase that catalyzes slow GTP hydrolysis, GTPase activity is stimulated by the 30S ribosomal subunit. The sequence is that of Small ribosomal subunit biogenesis GTPase RsgA from Prochlorococcus marinus (strain NATL1A).